We begin with the raw amino-acid sequence, 759 residues long: MMAALYPSTDLSGASSSSLPSSPSSSSPNEVMALKDVREVKEENTLNEKLFLLACDKGDYYMVKKILEENSSGDLNINCVDVLGRNAVTITIENENLDILQLLLDYGCQKLMERIQNPEYSTTMDVAPVILAAHRNNYEILTMLLKQDVSLPKPHAVGCECTLCSAKNKKDSLRHSRFRLDIYRCLASPALIMLTEEDPILRAFELSADLKELSLVEVEFRNDYEELARQCKMFAKDLLAQARNSRELEVILNHTSSDEPLDKRGLLEERMNLSRLKLAIKYNQKEFVSQSNCQQFLNTVWFGQMSGYRRKPTCKKIMTVLTVGIFWPVLSLCYLIAPKSQFGRIIHTPFMKFIIHGASYFTFLLLLNLYSLVYNEDKKNTMGPALERIDYLLILWIIGMIWSDIKRLWYEGLEDFLEESRNQLSFVMNSLYLATFALKVVAHNKFHDFADRKDWDAFHPTLVAEGLFAFANVLSYLRLFFMYTTSSILGPLQISMGQMLQDFGKFLGMFLLVLFSFTIGLTQLYDKGYTPKEQKDCVGIFCEQQSNDTFHSFIGTCFALFWYIFSLAHVAIFVTRFSYGEELQSFVGAVIVGTYNVVVVIVLTKLLVAMLHKSFQLIANHEDKEWKFARAKLWLSYFDDKCTLPPPFNIIPSPKTICYMISSLSKWICSHTSKGKVKRQNSLKEWRNLKQKRDENYQKVMCCLVHRYLTSMRQKMQSTDQATVENLNELRQDLSKFRNEIRDLLGFRTSKYAMFYPRN.

Residues 1 to 30 (MMAALYPSTDLSGASSSSLPSSPSSSSPNE) are disordered. Residues 1-352 (MMAALYPSTD…GRIIHTPFMK (352 aa)) are Cytoplasmic-facing. The span at 15–28 (SSSSLPSSPSSSSP) shows a compositional bias: low complexity. 3 ANK repeats span residues 46 to 75 (LNEK…SGDL), 83 to 112 (LGRN…QKLM), and 124 to 153 (MDVA…SLPK). Residues 353-373 (FIIHGASYFTFLLLLNLYSLV) traverse the membrane as a helical segment. Over 374–381 (YNEDKKNT) the chain is Extracellular. A helical membrane pass occupies residues 382–402 (MGPALERIDYLLILWIIGMIW). At 403 to 461 (SDIKRLWYEGLEDFLEESRNQLSFVMNSLYLATFALKVVAHNKFHDFADRKDWDAFHPT) the chain is on the cytoplasmic side. Residues 462-482 (LVAEGLFAFANVLSYLRLFFM) form a helical membrane-spanning segment. The Extracellular portion of the chain corresponds to 483–505 (YTTSSILGPLQISMGQMLQDFGK). The chain crosses the membrane as a helical span at residues 506-526 (FLGMFLLVLFSFTIGLTQLYD). Residues 527-552 (KGYTPKEQKDCVGIFCEQQSNDTFHS) are Cytoplasmic-facing. Residues 553-573 (FIGTCFALFWYIFSLAHVAIF) form a helical membrane-spanning segment. At 574 to 582 (VTRFSYGEE) the chain is on the extracellular side. The chain crosses the membrane as a helical span at residues 583–603 (LQSFVGAVIVGTYNVVVVIVL). Residues 604 to 759 (TKLLVAMLHK…SKYAMFYPRN (156 aa)) are Cytoplasmic-facing.

This sequence belongs to the transient receptor (TC 1.A.4) family. STrpC subfamily. TRPC1 sub-subfamily. As to quaternary structure, homotetramer and heterotetramer with TRPC4 and/or TRPC5. Interacts with TRPC4 and TRPC5. Interacts with ITPR3. Interacts with MX1 and RNF24. Interacts with FKBP4. Interacts with TRPC4AP. Interacts with PLSCR1. Interacts with PKD2L2. Forms a heterotetramer with PKD2 with a 2:2 stoichiometry; has distinct channel properties separate from PKD2 or TRPC1 homomers alone. In terms of processing, activation of PRKCA induces phosphorylation of TRPC1 and subsequent Ca2+ entry into cells.

The protein resides in the cell membrane. It carries out the reaction Ca(2+)(in) = Ca(2+)(out). In terms of biological role, forms a receptor-activated non-selective calcium permeant cation channel. Probably is operated by a phosphatidylinositol second messenger system activated by receptor tyrosine kinases or G-protein coupled receptors. Also activated by intracellular calcium store depletion. This Oryctolagus cuniculus (Rabbit) protein is Short transient receptor potential channel 1 (TRPC1).